Reading from the N-terminus, the 181-residue chain is Isopentenyl-diphosphate Delta-isomerase (181 aa).

Mn(2+) contacts are provided by His29 and His36. The Nudix hydrolase domain maps to 34–167 (PLHLAFSCYL…GWAISPWAAE (134 aa)). Cys71 is an active-site residue. Residue His73 coordinates Mn(2+). Glu91 contacts Mg(2+). The Mn(2+) site is built by Glu118 and Glu120. Residue Glu120 is part of the active site.

This sequence belongs to the IPP isomerase type 1 family. Mg(2+) serves as cofactor. Mn(2+) is required as a cofactor.

It localises to the cytoplasm. The enzyme catalyses isopentenyl diphosphate = dimethylallyl diphosphate. Its pathway is isoprenoid biosynthesis; dimethylallyl diphosphate biosynthesis; dimethylallyl diphosphate from isopentenyl diphosphate: step 1/1. In terms of biological role, catalyzes the 1,3-allylic rearrangement of the homoallylic substrate isopentenyl (IPP) to its highly electrophilic allylic isomer, dimethylallyl diphosphate (DMAPP). This Mycolicibacterium vanbaalenii (strain DSM 7251 / JCM 13017 / BCRC 16820 / KCTC 9966 / NRRL B-24157 / PYR-1) (Mycobacterium vanbaalenii) protein is Isopentenyl-diphosphate Delta-isomerase.